Here is a 122-residue protein sequence, read N- to C-terminus: Large ribosomal subunit protein uL14 (122 aa).

Belongs to the universal ribosomal protein uL14 family. In terms of assembly, part of the 50S ribosomal subunit. Forms a cluster with proteins L3 and L19. In the 70S ribosome, L14 and L19 interact and together make contacts with the 16S rRNA in bridges B5 and B8.

Binds to 23S rRNA. Forms part of two intersubunit bridges in the 70S ribosome. This is Large ribosomal subunit protein uL14 from Bordetella parapertussis (strain 12822 / ATCC BAA-587 / NCTC 13253).